The following is a 109-amino-acid chain: Large ribosomal subunit protein uL22 (109 aa).

The protein belongs to the universal ribosomal protein uL22 family. Part of the 50S ribosomal subunit.

Its function is as follows. This protein binds specifically to 23S rRNA; its binding is stimulated by other ribosomal proteins, e.g. L4, L17, and L20. It is important during the early stages of 50S assembly. It makes multiple contacts with different domains of the 23S rRNA in the assembled 50S subunit and ribosome. The globular domain of the protein is located near the polypeptide exit tunnel on the outside of the subunit, while an extended beta-hairpin is found that lines the wall of the exit tunnel in the center of the 70S ribosome. The polypeptide is Large ribosomal subunit protein uL22 (Psychrobacter sp. (strain PRwf-1)).